Consider the following 602-residue polypeptide: Zinc finger MYND domain-containing protein 11 (602 aa).

An SAMD1-like winged helix (WH) domain is found at 6 to 82 (KRRQADTKAI…CKGSKAGIEQ (77 aa)). The PHD-type zinc finger occupies 100–148 (DWYCFECHLPGEVLICDLCFRVYHSKCLSDEFRLRDSSSPWQCPVCRSI). Positions 149–255 (KKKNTNKQEM…KDTCHELDEL (107 aa)) constitute a Bromo domain. The Zn(2+) site is built by Cys258, Cys261, Cys277, and His281. The PWWP domain occupies 280 to 331 (NHELVWAKMKGFGFWPAKVMQKEDNQVDVRFFGHHHQRAWIPSENIQDITVN). Lys366 is covalently cross-linked (Glycyl lysine isopeptide (Lys-Gly) (interchain with G-Cter in SUMO2)). Residues 366-459 (KNEDRGEEEA…MLHRSTQTTN (94 aa)) are disordered. The short motif at 394 to 400 (RAKKGRR) is the Nuclear localization signal element. Residues Lys407 and Lys408 each participate in a glycyl lysine isopeptide (Lys-Gly) (interchain with G-Cter in SUMO2) cross-link. Residue Ser421 is modified to Phosphoserine. The span at 435–459 (SVSTQTKKLSASSPRMLHRSTQTTN) shows a compositional bias: polar residues. The interaction with human adenovirus E1A stretch occupies residues 452–572 (HRSTQTTNDG…CYNCEEEAMY (121 aa)). Zn(2+) is bound by residues Cys563, Cys566, Cys574, Cys575, Cys581, Cys585, His594, and Cys598. The segment at 563–598 (CYNCEEEAMYHCCWNTSYCSIKCQQEHWHAEHKRTC) adopts an MYND-type zinc-finger fold.

As to quaternary structure, homooligomer; forms homooligomers via its C-terminus. Interacts with histone H3.3 trimethylated at 'Lys-36' (H3.3K36me3). Interacts (via MYND-type zinc finger) with NCOR1. Interacts (via MYND-type zinc finger) with MGA protein (via PXLXP motif). Interacts (via MYND-type zinc finger) with EZH2. Interacts with EMSY and E2F6. Interacts with PIAS1 and UBE2I. (Microbial infection) Interacts (via MYND-type zinc finger) with human adenovirus early E1A protein (via PXLXP motif); this interaction inhibits E1A mediated transactivation. In terms of assembly, (Microbial infection) Interacts (via MYND-type zinc finger) with Epstein-Barr virus EBNA2 protein (via PXLXP motif). Interacts with Epstein-Barr virus-derived protein LMP1; leading to negatively regulate NF-kappa-B activation by Epstein-Barr virus-derived protein LMP1. Post-translationally, sumoylated following its interaction with PIAS1 and UBE2I. Ubiquitinated, leading to proteasomal degradation. In terms of tissue distribution, ubiquitous.

The protein resides in the nucleus. It localises to the chromosome. In terms of biological role, chromatin reader that specifically recognizes and binds histone H3.3 trimethylated at 'Lys-36' (H3.3K36me3) and regulates RNA polymerase II elongation. Does not bind other histone H3 subtypes (H3.1 or H3.2). Colocalizes with highly expressed genes and functions as a transcription corepressor by modulating RNA polymerase II at the elongation stage. Binds non-specifically to dsDNA. Acts as a tumor-suppressor by repressing a transcriptional program essential for tumor cell growth. Its function is as follows. (Microbial infection) Inhibits Epstein-Barr virus EBNA2-mediated transcriptional activation and host cell proliferation, through direct interaction. This Homo sapiens (Human) protein is Zinc finger MYND domain-containing protein 11.